The chain runs to 80 residues: Exodeoxyribonuclease 7 small subunit (80 aa).

Positions 60–80 (LIDSDGTEHNLDPNNASAPEE) are disordered. A compositionally biased stretch (basic and acidic residues) spans 61-70 (IDSDGTEHNL). Residues 71-80 (DPNNASAPEE) show a composition bias toward polar residues.

It belongs to the XseB family. As to quaternary structure, heterooligomer composed of large and small subunits.

The protein resides in the cytoplasm. It carries out the reaction Exonucleolytic cleavage in either 5'- to 3'- or 3'- to 5'-direction to yield nucleoside 5'-phosphates.. Its function is as follows. Bidirectionally degrades single-stranded DNA into large acid-insoluble oligonucleotides, which are then degraded further into small acid-soluble oligonucleotides. The sequence is that of Exodeoxyribonuclease 7 small subunit from Lactobacillus acidophilus (strain ATCC 700396 / NCK56 / N2 / NCFM).